The sequence spans 540 residues: Chaperonin GroEL 2 (540 aa).

Residues T30–P33, K51, D87–T91, G415, N480–L482, and D496 each bind ATP.

This sequence belongs to the chaperonin (HSP60) family. As to quaternary structure, forms a cylinder of 14 subunits composed of two heptameric rings stacked back-to-back. Interacts with the co-chaperonin GroES.

The protein resides in the cytoplasm. The catalysed reaction is ATP + H2O + a folded polypeptide = ADP + phosphate + an unfolded polypeptide.. Its function is as follows. Together with its co-chaperonin GroES, plays an essential role in assisting protein folding. The GroEL-GroES system forms a nano-cage that allows encapsulation of the non-native substrate proteins and provides a physical environment optimized to promote and accelerate protein folding. The polypeptide is Chaperonin GroEL 2 (Protochlamydia amoebophila (strain UWE25)).